Reading from the N-terminus, the 357-residue chain is Isoflavone 7-O-methyltransferase (357 aa).

Residues 200-203 (VGGG), Asp-224, 224-225 (DR), 244-245 (DM), and Lys-258 contribute to the S-adenosyl-L-methionine site. Residue His-262 is the Proton acceptor of the active site.

Belongs to the class I-like SAM-binding methyltransferase superfamily. Cation-independent O-methyltransferase family. COMT subfamily.

It catalyses the reaction a 7-hydroxyisoflavone + S-adenosyl-L-methionine = a 7-methoxyisoflavone + S-adenosyl-L-homocysteine + H(+). Functionally, 7-O-methyltransferase involved in the biosynthesis of isoformononetin. Can use daidzein as substrate, but not medicarpin or 2,7,4'-trihydroxyisoflavanone. In Glycyrrhiza echinata (Licorice), this protein is Isoflavone 7-O-methyltransferase (D7OMT).